A 78-amino-acid chain; its full sequence is Serine rich endogenous peptide 12 (78 aa).

A signal peptide spans 1–24; sequence MRNTISSKMGQVLIVLLLLCTVLC. Residues 25–43 constitute a propeptide, removed in mature form; it reads RTESALPSGQHSVLLTGRR. The segment at 47–78 is disordered; that stretch reads SGASGPVRSSQSSQAGGRFNDADPIAIDYGKY. The short motif at 50–64 is the SCOOP motif element; the sequence is SGPVRSSQSSQAGGR. Residues 56 to 58 carry the SxS motif essential for MIK2 binding motif; that stretch reads SQS.

This sequence belongs to the serine rich endogenous peptide (SCOOP) phytocytokine family. In terms of assembly, interacts with MIK2 (via extracellular leucine-rich repeat domain); this interaction triggers the formation of complex between MIK2 and the BAK1/SERK3 and SERK4 coreceptors, and subsequent BAK1 activation by phosphorylation on 'Ser-612'. In terms of tissue distribution, mostly expressed in the whole root system, and, to a lower extent, in seedlings shoots.

The protein localises to the cell membrane. The protein resides in the secreted. It localises to the extracellular space. Its subcellular location is the apoplast. Functionally, brassicaceae-specific phytocytokine (plant endogenous peptide released into the apoplast) perceived by MIK2 in a BAK1/SERK3 and SERK4 coreceptors-dependent manner, that modulates various physiological and antimicrobial processes including root growth prevention, phospholipid signaling pathway activation (e.g. accumulation of phosphatidic acid (PA), but transient reduction of phosphatidylinositol 4,5-bisphosphate (PIP(2)) levels) and reactive oxygen species (ROS) response regulation. Moderates primary root growth, and regulates root meristems and cell elongation; this root growth regulation is associated with the modulation of ROS metabolism and alteration of cell wall structure, and depends on variations in many genes expression. Promotes ROS (e.g. superoxide anion O(2) and hydrogen peroxide H(2)O(2)) production and MAPK (e.g. MPK3, MPK4 and MPK6) activation in a MIK2-dependent manner, thus leading to the up-regulation of immune-related marker genes (e.g. WRKY30, WRKY33 and CYP81F2). Involved in biotic and oxidative stress responses; acts as a negative regulator of defense against necrotrophic pathogens such as the bacteria Erwinia amylovora and the fungus Alternaria brassicicola. Able to prime defense responses against the pathogenic bacteria Pseudomonas syringae pv. tomato DC3000. Contributes to the triggering of defense responses toward generalist herbivores such as Spodoptera littoralis, probably via the activation of jasmonate and indole glucosinolate biosynthesis. Triggers the expression of several PROSCOOP genes (e.g. PROSCOOP3, PROSCOOP7, PROSCOOP12 and PROSCOOP13). The polypeptide is Serine rich endogenous peptide 12 (Arabidopsis thaliana (Mouse-ear cress)).